The primary structure comprises 54 residues: MLYYAAVFFVIALIAAVLGFGGIAAGAAGIAKILFFVFLVLALLSVLSGALRKK.

2 consecutive transmembrane segments (helical) span residues 5-25 (AAVF…GIAA) and 27-47 (AAGI…LSVL).

This sequence belongs to the UPF0391 family.

The protein resides in the cell membrane. The polypeptide is UPF0391 membrane protein BAV1230 (Bordetella avium (strain 197N)).